Consider the following 1530-residue polypeptide: Neurexin-1 (1530 aa).

Residues 1 to 30 (MGTALLQRGGCFLLCLSLLLLGCWAELGSG) form the signal peptide. A Laminin G-like 1 domain is found at 31–212 (LEFPGAEGQW…KLDDEPPNSG (182 aa)). Topologically, residues 31 to 1454 (LEFPGAEGQW…EVIRESSSTT (1424 aa)) are extracellular. N-linked (GlcNAc...) asparagine glycans are attached at residues N125 and N190. Positions 199–221 (SGEVKLDDEPPNSGGGSPCEAGE) are disordered. One can recognise an EGF-like 1 domain in the interval 213–256 (GGSPCEAGEEGEGGVCLNGGVCSVVDDQAVCDCSRTGFRGKDCS). Disulfide bonds link C228–C243 and C245–C255. 2 consecutive Laminin G-like domains span residues 299–496 (IATF…AFKC) and 503–695 (DPIT…KPSC). 3 residues coordinate Ca(2+): D345, L362, and M430. Intrachain disulfides connect C460/C496, C666/C695, C703/C714, C708/C723, and C725/C735. One can recognise an EGF-like 2 domain in the interval 699–736 (TAKPCLSNPCKNNGMCRDGWNRYVCDCSGTGYLGRSCE). The O-linked (Glc...) serine glycan is linked to S705. Laminin G-like domains lie at 741–914 (VLSY…IDYC) and 928–1103 (DPVT…ERGC). Residues D788 and L805 each coordinate Ca(2+). An N-linked (GlcNAc...) asparagine glycan is attached at N813. R864 is a Ca(2+) binding site. 5 disulfides stabilise this stretch: C906/C914, C1075/C1103, C1110/C1121, C1115/C1130, and C1132/C1142. Residues 1106–1143 (PSTTCQEDSCSNQGVCLQQWDGISCDCSMTSFSGPLCN) enclose the EGF-like 3 domain. Positions 1149–1347 (YIFSKGGGQI…DANIAIVGNV (199 aa)) constitute a Laminin G-like 6 domain. 2 residues coordinate Ca(2+): D1199 and V1216. N-linked (GlcNAc...) asparagine glycosylation occurs at N1246. I1298 and N1300 together coordinate Ca(2+). Residue S1408 is glycosylated (O-linked (Xyl...) (heparan sulfate) serine). Residues 1411–1443 (CPSDDEDIDPCEPSSGGLANPTRAGGREPYPGS) form a disordered region. The helical transmembrane segment at 1455–1475 (GMVVGIVAAAALCILILLYAM) threads the bilayer. The Cytoplasmic segment spans residues 1476–1530 (YKYRNRDEGSYHVDESRNYISNSAQSNGAVVKEKQPSSAKSANKNKKNKDKEYYV). The segment at 1497-1523 (NSAQSNGAVVKEKQPSSAKSANKNKKN) is interaction with CASK. The tract at residues 1497 to 1530 (NSAQSNGAVVKEKQPSSAKSANKNKKNKDKEYYV) is disordered.

The protein belongs to the neurexin family. In terms of assembly, interacts (via laminin G-like domain 2 and/or laminin G-like domain 6) with NLGN1 forming a heterotetramer, where one NLGN1 dimer interacts with one NRXN1 dimer. Also interacts (via laminin G-like domain 2 and/or laminin G-like domain 6) with NLGN2, NLGN3 and NLGN4L; interactions with NLGN1, NLGN2, NLGN3 and NLGN4L are calcium-dependent. Interacts (via cytoplasmic C-terminal region) with CASK (via the PDZ, SH3 and guanylate kinase-like domains). Interacts (via cytoplasmic C-terminus) with CASKIN1 and APBA1. Interacts (via laminin G-like domain 2) with NXPH1 and NXPH3. Alpha-type isoforms (neurexin-1-alpha) interact (via laminin G-like domain 2 and/or laminin G-like domain 6) with DAG1 (via alpha-dystroglycan chain). Interacts with LRRTM1, LRRTM2, LRRTM3 and LRRTM4. Interacts with SYT13 and SYTL1. Interacts with CBLN1, CBLN2 and, less avidly, with CBLN4. Interacts with CLSTN3. Alpha-type isoforms interact with alpha-latrotoxin from spider venom. Post-translationally, O-glycosylated; contains heparan sulfate. Heparan sulfate attachment is required for synapse development by mediating interactions with neuroligins and LRRTM2.

It is found in the presynaptic cell membrane. In terms of biological role, cell surface protein involved in cell-cell-interactions, exocytosis of secretory granules and regulation of signal transmission. Function is isoform-specific. Alpha-type isoforms have a long N-terminus with six laminin G-like domains and play an important role in synaptic signal transmission. Alpha-type isoforms play a role in the regulation of calcium channel activity and Ca(2+)-triggered neurotransmitter release at synapses and at neuromuscular junctions. They play an important role in Ca(2+)-triggered exocytosis of secretory granules in pituitary gland. They may affect their functions at synapses and in endocrine cells via their interactions with proteins from the exocytotic machinery. Likewise, alpha-type isoforms play a role in regulating the activity of postsynaptic NMDA receptors, a subtype of glutamate-gated ion channels. Both alpha-type and beta-type isoforms may play a role in the formation or maintenance of synaptic junctions via their interactions (via the extracellular domains) with neuroligin family members, CBLN1 or CBLN2. In vitro, triggers the de novo formation of presynaptic structures. May be involved in specification of excitatory synapses. Alpha-type isoforms were first identified as receptors for alpha-latrotoxin from spider venom. This is Neurexin-1 (NRXN1) from Bos taurus (Bovine).